Reading from the N-terminus, the 158-residue chain is Transmembrane protein 50B (158 aa).

Alanine 2 carries the N-acetylalanine modification. 4 helical membrane passes run 28-48 (VVAGILFFTGWWIMIDAAVVY), 56-76 (HAFHTCGVFSTLAFFMINAVS), 98-118 (WLFIGFMLMFGSLIASMWILF), and 128-148 (VYPGLAVFFQNALIFFSTLIY).

It belongs to the UPF0220 family. May form homotrimers or homodimers.

The protein localises to the endoplasmic reticulum membrane. It is found in the golgi apparatus membrane. In Bos taurus (Bovine), this protein is Transmembrane protein 50B (TMEM50B).